The chain runs to 642 residues: Threonine--tRNA ligase (642 aa).

Residues M1–T61 enclose the TGS domain. The tract at residues D243–P534 is catalytic. Zn(2+) contacts are provided by C334, H385, and H511.

The protein belongs to the class-II aminoacyl-tRNA synthetase family. In terms of assembly, homodimer. Zn(2+) is required as a cofactor.

It localises to the cytoplasm. It catalyses the reaction tRNA(Thr) + L-threonine + ATP = L-threonyl-tRNA(Thr) + AMP + diphosphate + H(+). In terms of biological role, catalyzes the attachment of threonine to tRNA(Thr) in a two-step reaction: L-threonine is first activated by ATP to form Thr-AMP and then transferred to the acceptor end of tRNA(Thr). Also edits incorrectly charged L-seryl-tRNA(Thr). The polypeptide is Threonine--tRNA ligase (Baumannia cicadellinicola subsp. Homalodisca coagulata).